A 110-amino-acid polypeptide reads, in one-letter code: Multidrug transporter PA4990 (110 aa).

4 consecutive transmembrane segments (helical) span residues 7 to 27 (LAIAIAAEVVATTSLKAVAGF), 31 to 51 (LPLLLVVGGYVLAFSMLVLVM), 58 to 78 (VVYAIWSGLGIVLVSLVAMFV), and 85 to 105 (PAALLGIGLIIAGVLVIQLFS).

This sequence belongs to the drug/metabolite transporter (DMT) superfamily. Small multidrug resistance (SMR) (TC 2.A.7.1) family.

It localises to the cell membrane. In terms of biological role, confers resistance to ethidium bromide, acriflavine and methyl viologen. This chain is Multidrug transporter PA4990, found in Pseudomonas aeruginosa (strain ATCC 15692 / DSM 22644 / CIP 104116 / JCM 14847 / LMG 12228 / 1C / PRS 101 / PAO1).